The sequence spans 166 residues: Thioredoxin, mitochondrial (166 aa).

Residues 1-59 (MAQRLLLGRFLTSVISRKPPQGVWASLTSKTLQTPQYNAGGLTVMPSPARTVHTTRVCL) constitute a mitochondrion transit peptide. Positions 61–166 (TFNVQDGPDF…LEAFLKKLIG (106 aa)) constitute a Thioredoxin domain. Active-site nucleophile residues include Cys-90 and Cys-93. Cysteines 90 and 93 form a disulfide. The residue at position 152 (Lys-152) is an N6-acetyllysine; alternate. Lys-152 is modified (N6-succinyllysine; alternate).

Belongs to the thioredoxin family. As to quaternary structure, monomer.

Its subcellular location is the mitochondrion. In terms of biological role, important for the control of mitochondrial reactive oxygen species homeostasis, apoptosis regulation and cell viability. Is involved in various redox reactions including the reduction of protein disulfide bonds, through the reversible oxidation of its active center dithiol to a disulfide. In Mus musculus (Mouse), this protein is Thioredoxin, mitochondrial (Txn2).